We begin with the raw amino-acid sequence, 251 residues long: Ribosomal RNA small subunit methyltransferase J (251 aa).

Residues 100–101 (RD), 116–117 (ER), and D170 each bind S-adenosyl-L-methionine.

It belongs to the methyltransferase superfamily. RsmJ family.

The protein resides in the cytoplasm. The enzyme catalyses guanosine(1516) in 16S rRNA + S-adenosyl-L-methionine = N(2)-methylguanosine(1516) in 16S rRNA + S-adenosyl-L-homocysteine + H(+). Specifically methylates the guanosine in position 1516 of 16S rRNA. This Actinobacillus pleuropneumoniae serotype 5b (strain L20) protein is Ribosomal RNA small subunit methyltransferase J.